The following is a 305-amino-acid chain: Glycine--tRNA ligase alpha subunit (305 aa).

This sequence belongs to the class-II aminoacyl-tRNA synthetase family. Tetramer of two alpha and two beta subunits.

It localises to the cytoplasm. The catalysed reaction is tRNA(Gly) + glycine + ATP = glycyl-tRNA(Gly) + AMP + diphosphate. The chain is Glycine--tRNA ligase alpha subunit from Streptococcus pyogenes serotype M2 (strain MGAS10270).